Here is a 102-residue protein sequence, read N- to C-terminus: Small ribosomal subunit protein uS10 (102 aa).

Belongs to the universal ribosomal protein uS10 family. Part of the 30S ribosomal subunit.

Its function is as follows. Involved in the binding of tRNA to the ribosomes. The protein is Small ribosomal subunit protein uS10 of Macrococcus caseolyticus (strain JCSC5402) (Macrococcoides caseolyticum).